The sequence spans 191 residues: MVQAINLKKGMIFSQDGKLIKVLKANHHKPGKGNTVMQMDLRDVKSGAVVHKTMRPTEKVDLVEVTKKSAQYLYNEGDNYTFMDTDTYDQYEVSADQLGDDIKFLMPNIVVDMDFTDDNKIIGIELPSTVEMTVKETQPGIKGATVAGGGKPATMETGLVVQVPDFINEGEKLVIGTENGDYKSRANSQPR.

Belongs to the elongation factor P family.

It localises to the cytoplasm. The protein operates within protein biosynthesis; polypeptide chain elongation. Involved in peptide bond synthesis. Stimulates efficient translation and peptide-bond synthesis on native or reconstituted 70S ribosomes in vitro. Probably functions indirectly by altering the affinity of the ribosome for aminoacyl-tRNA, thus increasing their reactivity as acceptors for peptidyl transferase. The chain is Elongation factor P 1 from Lactobacillus acidophilus (strain ATCC 700396 / NCK56 / N2 / NCFM).